The sequence spans 475 residues: MAAKSQPNIPKAKSLDGVTNDRTASQGQWGRAWEVDWFSLASVIFLLLFAPFIVYYFIMACDQYSCALTGPVVDIVTGHARLSDIWAKTPPITRKAAQLYTLWVTFQVLLYTSLPDFCHKFLPGYVGGIQEGAVTPAGVVNKYQINGLQAWLLTHLLWFANAHLLSWFSPTIIFDNWIPLLWCANILGYAVSTFAMVKGYFFPTSARDCKFTGNFFYNYMMGIEFNPRIGKWFDFKLFFNGRPGIVAWTLINLSFAAKQRELHSHVTNAMVLVNVLQAIYVIDFFWNETWYLKTIDICHDHFGWYLGWGDCVWLPYLYTLQGLYLVYHPVQLSTPHAVGVLLLGLVGYYIFRVANHQKDLFRRTDGRCLIWGRKPKVIECSYTSADGQRHHSKLLVSGFWGVARHFNYVGDLMGSLAYCLACGGGHLLPYFYIIYMAILLTHRCLRDEHRCASKYGRDWERYTAAVPYRLLPGIF.

A disordered region spans residues 1-21; the sequence is MAAKSQPNIPKAKSLDGVTND. S14 is subject to Phosphoserine. Helical transmembrane passes span 40–60, 154–174, 177–197, 266–286, 306–326, and 331–351; these read LASV…FIMA, THLL…TIIF, WIPL…FAMV, VTNA…DFFW, LGWG…LYLV, and QLST…YYIF. Residues K358, R362, L395, W400, and 407–408 each bind NADP(+); that span reads NY. Residues 420–440 form a helical membrane-spanning segment; it reads LACGGGHLLPYFYIIYMAILL. NADP(+)-binding positions include D447, 451-455, and Y462; that span reads CASKY.

It belongs to the ERG4/ERG24 family. Interacts with DHCR24; this interaction regulates DHCR7 activity. Interacts with TMEM147. As to expression, widely expressed. Most abundant in adrenal gland, liver, testis, and brain.

It is found in the endoplasmic reticulum membrane. It carries out the reaction cholesterol + NADP(+) = 7-dehydrocholesterol + NADPH + H(+). The enzyme catalyses 7-dehydrodesmosterol + NADPH + H(+) = desmosterol + NADP(+). It catalyses the reaction 5,6alpha-epoxy-5alpha-cholestan-3beta-ol + H2O = 5alpha-cholestane-3beta,5,6beta-triol. The catalysed reaction is 5,6beta-epoxy-5beta-cholestan-3beta-ol + H2O = 5alpha-cholestane-3beta,5,6beta-triol. Its pathway is steroid biosynthesis; cholesterol biosynthesis. Its activity is regulated as follows. 7-DHC reductase and cholesterol-5,6-epoxide hydrolase (ChEH) activities are inhibited by tamoxifen and the selective AEBS ligand (4-benzyl-phenoxy)-ethyl-N-pyrrolidine (PBPE). ChEH activity is inhibited by oleic acid. In terms of biological role, oxidoreductase that catalyzes the last step of the cholesterol synthesis pathway, which transforms cholesta-5,7-dien-3beta-ol (7-dehydrocholesterol,7-DHC) into cholesterol by reducing the C7-C8 double bond of its sterol core. Can also metabolize cholesta-5,7,24-trien-3beta-ol (7-dehydrodemosterol, 7-DHD) to desmosterol, which is then metabolized by the Delta(24)-sterol reductase (DHCR24) to cholesterol. Modulates ferroptosis (a form of regulated cell death driven by iron-dependent lipid peroxidation) through the metabolic breakdown of the anti-ferroptotic metabolites 7-DHC and 7-DHD which, when accumulated, divert the propagation of peroxyl radical-mediated damage from phospholipid components to its sterol core, protecting plasma and mitochondrial membranes from phospholipid autoxidation. Functionally, component of the microsomal antiestrogen binding site (AEBS), a multiproteic complex at the ER membrane that consists of an association between cholestenol Delta-isomerase/EBP and DHCR7. This complex is responsible for cholesterol-5,6-epoxide hydrolase (ChEH) activity, which consists in the hydration of cholesterol-5,6-epoxides (5,6-EC) into cholestane-3beta,5alpha,6beta-triol (CT). The precise role of each component of this complex has not been described yet. The chain is 7-dehydrocholesterol reductase from Homo sapiens (Human).